The chain runs to 487 residues: Protein nucleotidyltransferase YdiU (487 aa).

Residues glycine 90, glycine 92, arginine 93, lysine 113, aspartate 125, glycine 126, arginine 176, and arginine 183 each coordinate ATP. Aspartate 252 functions as the Proton acceptor in the catalytic mechanism. Mg(2+)-binding residues include asparagine 253 and aspartate 262. Aspartate 262 contributes to the ATP binding site.

It belongs to the SELO family. Requires Mg(2+) as cofactor. The cofactor is Mn(2+).

The catalysed reaction is L-seryl-[protein] + ATP = 3-O-(5'-adenylyl)-L-seryl-[protein] + diphosphate. It catalyses the reaction L-threonyl-[protein] + ATP = 3-O-(5'-adenylyl)-L-threonyl-[protein] + diphosphate. The enzyme catalyses L-tyrosyl-[protein] + ATP = O-(5'-adenylyl)-L-tyrosyl-[protein] + diphosphate. It carries out the reaction L-histidyl-[protein] + UTP = N(tele)-(5'-uridylyl)-L-histidyl-[protein] + diphosphate. The catalysed reaction is L-seryl-[protein] + UTP = O-(5'-uridylyl)-L-seryl-[protein] + diphosphate. It catalyses the reaction L-tyrosyl-[protein] + UTP = O-(5'-uridylyl)-L-tyrosyl-[protein] + diphosphate. In terms of biological role, nucleotidyltransferase involved in the post-translational modification of proteins. It can catalyze the addition of adenosine monophosphate (AMP) or uridine monophosphate (UMP) to a protein, resulting in modifications known as AMPylation and UMPylation. The polypeptide is Protein nucleotidyltransferase YdiU (Pseudomonas syringae pv. syringae (strain B728a)).